Consider the following 571-residue polypeptide: MKFMKLGSKPDTFESDGKFVKYAVSDLDSDVTIHVGEVTFHLHKFPLLSKSNRMQRLVFEASEEKTDEITILDMPGGYKAFEICAKFCYGMTVTLNAYNITAVRCAAEYLEMTEDADRGNLIYKIEVFLNSGIFRSWKDSIIVLQTTRSLLPWSEDLKLVGRCIDSVSAKILVNPETITWSYTFNRKLSGPDKIVEYHREKREENVIPKDWWVEDVCELEIDMFKRVISVVKSSGRMNNGVIAEALRYYVARWLPESMESLTSEASSNKDLVETVVFLLPKVNRAMSYSSCSFLLKLLKVSILVGADETVREDLVENVSLKLHEASVKDLLIHEVELVHRIVDQFMADEKRVSEDDRYKEFVLGNGILLSVGRLIDAYLALNSELTLSSFVELSELVPESARPIHDGLYKAIDTFMKEHPELTKSEKKRLCGLMDVRKLTNEASTHAAQNERLPLRVVVQVLYFEQLRANHSPVASVAASSHSPVEKTEENKGEEATKKVELSKKSRGSKSTRSGGGAQLMPSRSRRIFEKIWPGKGEISNKSSEVSSGSSQSPPAKSSSSSSRRRRHSIS.

In terms of domain architecture, BTB spans 29–97; that stretch reads SDVTIHVGEV…CYGMTVTLNA (69 aa). An NPH3 domain is found at 210-468; it reads DWWVEDVCEL…VQVLYFEQLR (259 aa). The residue at position 409 (Tyr-409) is a Phosphotyrosine. The segment at 475–571 is disordered; it reads ASVAASSHSP…SSRRRRHSIS (97 aa). The segment covering 484–504 has biased composition (basic and acidic residues); the sequence is PVEKTEENKGEEATKKVELSK. The span at 540–562 shows a compositional bias: low complexity; it reads SNKSSEVSSGSSQSPPAKSSSSS.

The protein belongs to the NPH3 family. In terms of assembly, component of a complex made of PINs (e.g. PIN1 and PIN2), MAB4/MELs (e.g. NPY1/MAB4 and NPY5/MEL1) and AGC kinases (e.g. D6PK and PID) at the plasma membrane. Binds directly to PIN2 and PID. As to expression, accumulates in organ primordia such as cotyledons, leaves and floral organs. Expressed mainly in the apical regions of embryos including cotyledon tips and the apical meristem. Induced by the transcription factor ARF5/MP at the periphery of inflorescence meristems. Highly expressed in primary root tips and radicles.

The protein localises to the late endosome. The protein resides in the cell membrane. It localises to the cytoplasm. Its subcellular location is the cytosol. The protein operates within protein modification; protein ubiquitination. In terms of biological role, may act as a substrate-specific adapter of an E3 ubiquitin-protein ligase complex (CUL3-RBX1-BTB) which mediates the ubiquitination and subsequent proteasomal degradation of target proteins. Coregulates with PID the auxin-mediated plant organogenesis. Regulates basipetal PIN proteins (e.g. PIN1) polarization to establish inward auxin transport from the L1 surface of incipient organ primordia; this process is essential for the progression of flower organs development. Recruited to the plasma membrane by PINs (e.g. PIN1 and PIN2) and, in concert with AGC kinases-mediated (e.g. D6PK and PID) PINs phosphorylation, maintains their cell polarity (apical or basal) through limiting lateral diffusion-based escape. Induces auxin response in inner cell layers through a shift in PIN1 localization. Influences cotyledon development by regulating auxin distribution mainly in the protodermal cell layer. May play an essential role in root gravitropic responses. The polypeptide is Phototropic-responsive NPH3 family protein NPY1 (Arabidopsis thaliana (Mouse-ear cress)).